We begin with the raw amino-acid sequence, 429 residues long: Nucleotide exchange factor Sil1 (429 aa).

The first 24 residues, 1–24 (MSGKQVVILLGSVLILGCLQVAAA), serve as a signal peptide directing secretion. N29 carries N-linked (GlcNAc...) asparagine glycosylation. A disordered region spans residues 70-98 (DESERGTSLQSQPDDQNARESHDDNEPLA). Polar residues predominate over residues 75–84 (GTSLQSQPDD). Positions 85–94 (QNARESHDDN) are enriched in basic and acidic residues. Residues 104–135 (DIIEESIRRVKEQKKSYAELRKAYKEFQKNFR) adopt a coiled-coil conformation. Residues N150, N199, and N400 are each glycosylated (N-linked (GlcNAc...) asparagine). Residues 426–429 (HTEL) carry the Prevents secretion from ER motif.

It belongs to the SIL1 family.

The protein resides in the endoplasmic reticulum lumen. Functionally, required for protein translocation and folding in the endoplasmic reticulum (ER). Functions as a nucleotide exchange factor for an ER lumenal chaperone of HSP70 family. The polypeptide is Nucleotide exchange factor Sil1 (Drosophila melanogaster (Fruit fly)).